The following is a 478-amino-acid chain: RNA exonuclease 3 (478 aa).

Residues 320–465 enclose the Exonuclease domain; it reads VLALDCEMAF…EDAIAAMDVI (146 aa).

This sequence belongs to the REXO1/REXO3 family.

It localises to the cytoplasm. The protein localises to the nucleus. Functionally, 3' to 5' exoribonuclease required for proper 3' end maturation of MRP RNA and of the U5L snRNA. This chain is RNA exonuclease 3 (REX3), found in Kluyveromyces lactis (strain ATCC 8585 / CBS 2359 / DSM 70799 / NBRC 1267 / NRRL Y-1140 / WM37) (Yeast).